A 79-amino-acid chain; its full sequence is Acyl carrier protein (79 aa).

The Carrier domain occupies 2–77; the sequence is SDIEERVKKI…SAIDYVNAHK (76 aa). An O-(pantetheine 4'-phosphoryl)serine modification is found at Ser-37.

The protein belongs to the acyl carrier protein (ACP) family. In terms of processing, 4'-phosphopantetheine is transferred from CoA to a specific serine of apo-ACP by AcpS. This modification is essential for activity because fatty acids are bound in thioester linkage to the sulfhydryl of the prosthetic group.

The protein localises to the cytoplasm. The protein operates within lipid metabolism; fatty acid biosynthesis. Functionally, carrier of the growing fatty acid chain in fatty acid biosynthesis. The protein is Acyl carrier protein of Pseudoalteromonas atlantica (strain T6c / ATCC BAA-1087).